Consider the following 891-residue polypeptide: von Willebrand factor A domain-containing protein 7 (891 aa).

Positions 1–28 (MLPVEVPLSHLGPPILLLLQLLLPPTSA) are cleaved as a signal peptide. An N-linked (GlcNAc...) asparagine glycan is attached at Asn55. The disordered stretch occupies residues 238 to 273 (PKPPGKCSHGGHFDQSSSQPPRGGINKDSTSPSFSP). The region spanning 314–499 (ASSLSFVLDT…DVAAIVGESM (186 aa)) is the VWFA domain.

In terms of tissue distribution, expressed at low level in many tissues.

The protein localises to the secreted. The sequence is that of von Willebrand factor A domain-containing protein 7 (Vwa7) from Mus musculus (Mouse).